The chain runs to 143 residues: FIS1-related protein fis-1 (143 aa).

A helical membrane pass occupies residues Leu121 to Phe141.

The protein belongs to the FIS1 family.

Its subcellular location is the mitochondrion outer membrane. It localises to the peroxisome membrane. Its function is as follows. Involved in the fragmentation of the mitochondrial network. Involved in perinuclear clustering of the mitochondrial network. Plays a role in removal of ultraviolet C radiation-induced mitochondrial DNA damage. May act, redundantly with fis-2, downstream of mitochondrial fission, before the fission products participate in either mitochondrial homeostasis, mitophagy, or apoptosis. The polypeptide is FIS1-related protein fis-1 (Caenorhabditis elegans).